Reading from the N-terminus, the 78-residue chain is Protein SlyX homolog (78 aa).

It belongs to the SlyX family.

This is Protein SlyX homolog from Xanthomonas oryzae pv. oryzae (strain MAFF 311018).